Consider the following 940-residue polypeptide: Lysine-specific demethylase 7A (940 aa).

A PHD-type zinc finger spans residues 37-88 (PVYCVCRQPYDVNRFMIECDVCKDWFHGSCVGVEEHHAVDIDLYHCPDCAAL). The tract at residues 97-114 (RRNWHRHDYTEVDDGSKP) is linker. Positions 230–386 (FSDTKMSELV…MQLRCYEMEK (157 aa)) constitute a JmjC domain. Thr-279 lines the substrate pocket. 2 residues coordinate Fe cation: His-282 and Asp-284. Residue Lys-299 coordinates substrate. His-354 is a Fe cation binding site. Disordered stretches follow at residues 483–509 (VKSQGIPSVCPVSRPSNEASPPYHSRR), 599–670 (LYTA…PDCT), 710–729 (SQKPSRQEIPVKRECPTSTS), 818–854 (NAQDLSRSQKHIKKESSSEINQKAQSRHCVDSNSSSI), and 876–920 (SPER…MATA). Ser-604 carries the post-translational modification Phosphoserine. Positions 613–623 (TQNANMKTEQS) are enriched in polar residues. The span at 714 to 724 (SRQEIPVKREC) shows a compositional bias: basic and acidic residues.

It belongs to the JHDM1 histone demethylase family. JHDM1D subfamily. Fe(2+) serves as cofactor.

The protein localises to the nucleus. The enzyme catalyses N(6),N(6)-dimethyl-L-lysyl(9)-[histone H3] + 2 2-oxoglutarate + 2 O2 = L-lysyl(9)-[histone H3] + 2 formaldehyde + 2 succinate + 2 CO2. It carries out the reaction N(6),N(6)-dimethyl-L-lysyl(27)-[histone H3] + 2 2-oxoglutarate + 2 O2 = L-lysyl(27)-[histone H3] + 2 formaldehyde + 2 succinate + 2 CO2. The catalysed reaction is N(6),N(6)-dimethyl-L-lysyl(36)-[histone H3] + 2-oxoglutarate + O2 = N(6)-methyl-L-lysyl(36)-[histone H3] + formaldehyde + succinate + CO2. It catalyses the reaction N(6)-methyl-L-lysyl(20)-[histone H4] + 2-oxoglutarate + O2 = L-lysyl(20)-[histone H4] + formaldehyde + succinate + CO2. Functionally, histone demethylase required for brain development. Specifically demethylates dimethylated 'Lys-9', 'Lys-27' and 'Lys-36' (H3K9me2, H3K27me2, H3K36me2, respectively) of histone H3 and monomethylated histone H4 'Lys-20' residue (H4K20Me1), thereby playing a central role in histone code. Specifically binds trimethylated 'Lys-4' of histone H3 (H3K4me3), affecting histone demethylase specificity: in presence of H3K4me3, it has no demethylase activity toward H3K9me2, while it has high activity toward H3K27me2. Demethylates H3K9me2 in absence of H3K4me3. Has activity toward H4K20Me1 only when nucleosome is used as a substrate and when not histone octamer is used as substrate. The sequence is that of Lysine-specific demethylase 7A (Kdm7a) from Mus musculus (Mouse).